We begin with the raw amino-acid sequence, 1042 residues long: MADAFGDELFSVFEGDSTTAAGTKKDKEKDKGKWKGPPGSADKAGKRFDGKLQSESTNNGKNKRDVDFEGTDEPIFGKKPRIEESITEDLSLADLMPRVKVQSVETVEGCTHEVALPAEEDYLPLKPRVGKAAKEYPFILDAFQREAIQCVDNNQSVLVSAHTSAGKTVCAEYAIALALREKQRVIFTSPIKALSNQKYREMYEEFQDVGLMTGDVTINPTASCLVMTTEILRSMLYRGSEVMREVAWVIFDEIHYMRDSERGVVWEETIILLPDNVHYVFLSATIPNARQFAEWICHLHKQPCHVIYTDYRPTPLQHYIFPAGGDGLHLVVDENGDFREDNFNTAMQVLRDAGDLAKGDQKGRKGGTKGPSNVFKIVKMIMERNFQPVIIFSFSKKDCEAYALQMTKLDFNTDEEKKMVEEVFSNAIDCLSDEDKKLPQVEHVLPLLKRGIGIHHGGLLPILKETIEILFSEGLIKALFATETFAMGINMPARTVLFTNARKFDGKDFRWISSGEYIQMSGRAGRRGMDDRGIVILMVDEKMSPTIGKQLLKGSADPLNSAFHLTYNMVLNLLRVEEINPEYMLEKSFYQFQHYRAIPGVVEKVKNSEEQYNKIVIPNEESVVIYYKIRQQLAKLGKEIEEYIHKPKYCLPFLQPGRLVKVKNEGDDFGWGVVVNFSKKSNVKPNSGELDPLYVVEVLLRCSKESLKNSATEAAKPAKPDEKGEMQVVPVLVHLLSAISSVRLYIPKDLRPVDNRQSVLKSIQEVQKRFPDGIPLLDPIDDMGIQDQGLKKVIQKVEAFEHRMYSHPLHNDPNLETVYTLCEKKAQIAIDIKSAKRELKKARTVLQMDELKCRKRVLRRLGFATSSDVIEMKGRVACEISSADELLLTEMMFNGLFNDLSAEQATALLSCFVFQENSSEMPKLTEQLAGPLRQMQECAKRIAKVSAEAKLEIDEETYLSSFKPHLMDVVYTWATGATFAHICKMTDVFEGSIIRCMRRLEELLRQMCQAAKAIGNTELENKFAEGITKIKRDIVFAASLYL.

Alanine 2 bears the N-acetylalanine mark. The segment at 16-74 (DSTTAAGTKKDKEKDKGKWKGPPGSADKAGKRFDGKLQSESTNNGKNKRDVDFEGTDEP) is disordered. Basic and acidic residues predominate over residues 23–33 (TKKDKEKDKGK). Residue lysine 24 forms a Glycyl lysine isopeptide (Lys-Gly) (interchain with G-Cter in SUMO2) linkage. Serine 40 carries the post-translational modification Phosphoserine. The segment covering 43-52 (KAGKRFDGKL) has biased composition (basic and acidic residues). 2 positions are modified to N6-acetyllysine: lysine 51 and lysine 78. ATP-binding positions include isoleucine 139, 161 to 168 (AHTSAGKT), serine 164, glycine 166, lysine 167, and threonine 168. In terms of domain architecture, Helicase ATP-binding spans 148 to 304 (IQCVDNNQSV…WICHLHKQPC (157 aa)). The DEIH box motif lies at 252-255 (DEIH). A Glycyl lysine isopeptide (Lys-Gly) (interchain with G-Cter in SUMO2) cross-link involves residue lysine 358. A Helicase C-terminal domain is found at 405–577 (QMTKLDFNTD…NMVLNLLRVE (173 aa)). Residues lysine 684 and lysine 723 each participate in a glycyl lysine isopeptide (Lys-Gly) (interchain with G-Cter in SUMO2) cross-link.

The protein belongs to the helicase family. SKI2 subfamily. As to quaternary structure, component of a TRAMP-like complex, an ATP-dependent exosome regulatory complex consisting of a helicase (MTREX), an oligadenylate polymerase (TENT4B or TENT4A), and a substrate specific RNA-binding factor (ZCCHC7 or ZCCHC8). Several TRAMP-like complexes exist with specific compositions and are associated with nuclear, or nucleolar RNA exosomes. Identified in the spliceosome C complex. Component of the poly(A) tail exosome targeting (PAXT) complex made of PABPN1, ZFC3H1 and MTREX that directs a subset of long and polyadenylated poly(A) RNAs for exosomal degradation. Component of the nuclear exosome targeting (NEXT) complex composed of MTREX, ZCCHC8, and RBM7 that directs a subset of non-coding short-lived RNAs for exosomal degradation. Interacts with ZCCHC8; this interaction bridges the interaction between RBM7 and MTREX. Binds to ZFC3H1 and RBM7 in a RNase-insensitive manner. Interacts with EXOSC10; the interaction mediates the association of MTREX with nuclear RNA exosomes. Interacts with isoform 1 of NVL in an ATP-dependent manner; the interaction is required to associate NVL with nuclear RNA exosome. Interacts with WDR74; the interaction dissociation in a late stage of rRNA synthesis is required for appropriate maturation of pre-60S particles and depends on the ATPase activity of NVL. Interacts with MPHOSPH6. Interacts with the RNA cap-binding complex proteins NCBP1 and SRRT. Interacts with NRDE2; the interaction is direct and negatively regulates MTREX function in exosomal degradation by changing its conformation precluding interaction with ZFC3H1, the RNA cap-binding complex proteins NCBP1 and SRRT, and association with the exosome. Associates with the RNA exosome complex.

Its subcellular location is the nucleus. It is found in the nucleoplasm. The protein localises to the nucleolus. It localises to the nucleus speckle. It catalyses the reaction ATP + H2O = ADP + phosphate + H(+). Its activity is regulated as follows. Activated when MTREX is incorporated into NEXT complex an the nuclear RNA exosome complex. Functionally, catalyzes the ATP-dependent unwinding of RNA duplexes with a single-stranded 3' RNA extension. Central subunit of many protein complexes, namely TRAMP-like, nuclear exosome targeting (NEXT) and poly(A) tail exosome targeting (PAXT). NEXT functions as an RNA exosome cofactor that directs a subset of non-coding short-lived RNAs for exosomal degradation. NEXT is involved in surveillance and turnover of aberrant transcripts and non-coding RNAs. PAXT directs a subset of long and polyadenylated poly(A) RNAs for exosomal degradation. The RNA exosome is fundamental for the degradation of RNA in eukaryotic nuclei. Substrate targeting is facilitated by its cofactor ZCCHC8, which links to RNA-binding protein adapters. Associated with the RNA exosome complex and involved in the 3'-processing of the 7S pre-RNA to the mature 5.8S rRNA. May be involved in pre-mRNA splicing. In the context of NEXT complex can also in vitro unwind DNA:RNA heteroduplexes with a 3' poly (A) RNA tracking strand. Can promote unwinding and degradation of structured RNA substrates when associated with the nuclear exosome and its cofactors. Can displace a DNA strand while translocating on RNA to ultimately degrade the RNA within a DNA/RNA heteroduplex. Plays a role in DNA damage response. This Homo sapiens (Human) protein is Exosome RNA helicase MTR4.